The following is a 233-amino-acid chain: MSVISMKQLLEAGVHFGHQTRRWNPKMAPYIFTERNGIYIIDLQKTVRKAEEAYNFIKEVSTEGKDILFVGTKKQAQDAIKDEAIRSSMHFVNNRWLGGMLTNFSTIKKRIRRLSEIETMQEDGTFEVLPKKEVIKLKGELEKLEKNLGGIKNLDCDNIGAMFVVDPRKEKNAISEAKILGIPVVAIVDTNCDPEEVDYVIPGNDDAIRAVKLITAKMADAIMEGRQGEELAE.

Belongs to the universal ribosomal protein uS2 family.

The protein is Small ribosomal subunit protein uS2 of Clostridium botulinum (strain Eklund 17B / Type B).